The following is a 100-amino-acid chain: Small ribosomal subunit protein uS14c (100 aa).

It belongs to the universal ribosomal protein uS14 family. In terms of assembly, part of the 30S ribosomal subunit.

It is found in the plastid. The protein localises to the chloroplast. Functionally, binds 16S rRNA, required for the assembly of 30S particles. In Arabis hirsuta (Hairy rock-cress), this protein is Small ribosomal subunit protein uS14c.